Consider the following 637-residue polypeptide: Early transcription factor 70 kDa subunit (637 aa).

One can recognise a Helicase ATP-binding domain in the interval 32-185 (RTIIDENRSV…GHIIDLMSEE (154 aa)). Residue 45-52 (HIMGSGKT) participates in ATP binding. The DEXH box motif lies at 135–138 (DKAH). The Helicase C-terminal domain occupies 327–507 (KFKYFINRIQ…VLPFDIKKLL (181 aa)).

The protein belongs to the helicase family. VETF subfamily. As to quaternary structure, heterodimer of a 70 kDa and a 82 kDa subunit. Part of the early transcription complex composed of ETF, RAP94/OPG109, and the DNA-directed RNA polymerase.

It is found in the virion. Functionally, acts with RNA polymerase to initiate transcription from early gene promoters. Is recruited by the RPO-associated protein of 94 kDa RAP94/OPG109 to form the early transcription complex, which also contains the core RNA polymerase. ETF heterodimer binds to early gene promoters. The chain is Early transcription factor 70 kDa subunit (OPG118) from Homo sapiens (Human).